A 122-amino-acid polypeptide reads, in one-letter code: Large ribosomal subunit protein uL14 (122 aa).

This sequence belongs to the universal ribosomal protein uL14 family. In terms of assembly, part of the 50S ribosomal subunit. Forms a cluster with proteins L3 and L19. In the 70S ribosome, L14 and L19 interact and together make contacts with the 16S rRNA in bridges B5 and B8.

Its function is as follows. Binds to 23S rRNA. Forms part of two intersubunit bridges in the 70S ribosome. This chain is Large ribosomal subunit protein uL14, found in Desulfitobacterium hafniense (strain DSM 10664 / DCB-2).